The primary structure comprises 343 residues: uncharacterized protein (343 aa).

This is an uncharacterized protein from Saccharolobus islandicus (Sulfolobus islandicus).